A 227-amino-acid polypeptide reads, in one-letter code: Thymidine kinase (227 aa).

Residues Gly15–Thr22 and Asp87–Gln90 each bind ATP. The Proton acceptor role is filled by Glu88. The Zn(2+) site is built by Cys144, Cys147, Cys176, and Cys179. The interval Arg198–Ala227 is disordered. The segment covering Ala217–Ala227 has biased composition (low complexity).

It belongs to the thymidine kinase family. Homotetramer.

The protein localises to the cytoplasm. The enzyme catalyses thymidine + ATP = dTMP + ADP + H(+). The polypeptide is Thymidine kinase (Salinibacter ruber (strain DSM 13855 / M31)).